Reading from the N-terminus, the 347-residue chain is D-alanine--D-alanine ligase (347 aa).

The ATP-grasp domain maps to 131–333 (KRVLESAGIA…YPELIERLVD (203 aa)). An ATP-binding site is contributed by 161–216 (EEKLAYPVFTKPSNMGSSVGISKSENQEELRQALKLAFRYDSRVLVEQGVNAREIE). Residues aspartate 287, glutamate 300, and asparagine 302 each contribute to the Mg(2+) site.

Belongs to the D-alanine--D-alanine ligase family. Requires Mg(2+) as cofactor. It depends on Mn(2+) as a cofactor.

Its subcellular location is the cytoplasm. The enzyme catalyses 2 D-alanine + ATP = D-alanyl-D-alanine + ADP + phosphate + H(+). Its pathway is cell wall biogenesis; peptidoglycan biosynthesis. Cell wall formation. The protein is D-alanine--D-alanine ligase of Streptococcus pneumoniae (strain ATCC BAA-255 / R6).